The sequence spans 109 residues: ATPase inhibitor mai-2, mitochondrial (109 aa).

Disordered regions lie at residues 18 to 39 (FSAGGHGDGAGRGGGSGGSIRD) and 73 to 109 (EEVKHHEGQLENHKKVLERHQQRISEIEAQERALGKE). The span at 21-35 (GGHGDGAGRGGGSGG) shows a compositional bias: gly residues. Residues 55-109 (YFYKKQKAQLQELREHIQEEVKHHEGQLENHKKVLERHQQRISEIEAQERALGKE) are a coiled coil.

This sequence belongs to the ATPase inhibitor family.

The protein resides in the mitochondrion. Functionally, thought to be a regulatory component of the ATP-synthesizing complex in the mitochondria. Activity is pH dependent. This is ATPase inhibitor mai-2, mitochondrial (mai-2) from Caenorhabditis elegans.